A 24-amino-acid chain; its full sequence is Superoxide dismutase [Cu-Zn] (24 aa).

It belongs to the Cu-Zn superoxide dismutase family. As to quaternary structure, homodimer. The cofactor is Cu cation. Requires Zn(2+) as cofactor.

The protein localises to the cytoplasm. It catalyses the reaction 2 superoxide + 2 H(+) = H2O2 + O2. Functionally, destroys radicals which are normally produced within the cells and which are toxic to biological systems. This is Superoxide dismutase [Cu-Zn] (sod1) from Aquarana catesbeiana (American bullfrog).